Consider the following 336-residue polypeptide: Glyceraldehyde-3-phosphate dehydrogenase, plasmid (336 aa).

Residues arginine 12–isoleucine 13, aspartate 37, arginine 81, and serine 123 each bind NAD(+). D-glyceraldehyde 3-phosphate is bound by residues serine 154 to threonine 156 and threonine 185. Cysteine 155 acts as the Nucleophile in catalysis. Position 186 (asparagine 186) interacts with NAD(+). Residues arginine 200, threonine 213–glycine 214, and arginine 236 contribute to the D-glyceraldehyde 3-phosphate site. Asparagine 317 serves as a coordination point for NAD(+).

It belongs to the glyceraldehyde-3-phosphate dehydrogenase family. As to quaternary structure, homotetramer.

The enzyme catalyses D-glyceraldehyde 3-phosphate + phosphate + NAD(+) = (2R)-3-phospho-glyceroyl phosphate + NADH + H(+). It functions in the pathway carbohydrate biosynthesis; Calvin cycle. Could be involved in carbon fixation as a component of the Calvin cycle. Catalyzes the oxidative phosphorylation of glyceraldehyde 3-phosphate (G3P) to 1,3-bisphosphoglycerate (BPG) using the cofactor NAD. The first reaction step involves the formation of a hemiacetal intermediate between G3P and a cysteine residue, and this hemiacetal intermediate is then oxidized to a thioester, with concomitant reduction of NAD to NADH. The reduced NADH is then exchanged with the second NAD, and the thioester is attacked by a nucleophilic inorganic phosphate to produce BPG. In Cupriavidus necator (strain ATCC 17699 / DSM 428 / KCTC 22496 / NCIMB 10442 / H16 / Stanier 337) (Ralstonia eutropha), this protein is Glyceraldehyde-3-phosphate dehydrogenase, plasmid (cbbGP).